The sequence spans 280 residues: Putative S-adenosyl-L-methionine-dependent methyltransferase FRAAL3836 (280 aa).

Residues Asp121 and 150–151 (DL) each bind S-adenosyl-L-methionine.

It belongs to the UPF0677 family.

Exhibits S-adenosyl-L-methionine-dependent methyltransferase activity. This is Putative S-adenosyl-L-methionine-dependent methyltransferase FRAAL3836 from Frankia alni (strain DSM 45986 / CECT 9034 / ACN14a).